We begin with the raw amino-acid sequence, 194 residues long: Imidazoleglycerol-phosphate dehydratase (194 aa).

The protein belongs to the imidazoleglycerol-phosphate dehydratase family.

It is found in the cytoplasm. It carries out the reaction D-erythro-1-(imidazol-4-yl)glycerol 3-phosphate = 3-(imidazol-4-yl)-2-oxopropyl phosphate + H2O. It participates in amino-acid biosynthesis; L-histidine biosynthesis; L-histidine from 5-phospho-alpha-D-ribose 1-diphosphate: step 6/9. This chain is Imidazoleglycerol-phosphate dehydratase, found in Bacillus anthracis (strain A0248).